The sequence spans 591 residues: MKKISLPKIGIRPVIDGRRMGVRESLEEQTMNMAKATAALLTEKLRHACGAAVECVISDTCIAGMAEAAACEEKFSSQNVGLTITVTPCWCYGSETIDMDPTRPKAIWGFNGTERPGAVYLAAALAAHSQKGIPAFSIYGHDVQDADDTSIPADVEEKLLRFARAGLAVASMKGKSYLSLGGVSMGIAGSIVDHNFFESWLGMKVQAVDMTELRRRIDQKIYDEAELEMALAWADKNFRYGEDENNKQYQRNAEQSRAVLRESLLMAMCIRDMMQGNSKLADIGRVEESLGYNAIAAGFQGQRHWTDQYPNGDTAEAILNSSFDWNGVREPFVVATENDSLNGVAMLMGHQLTGTAQVFADVRTYWSPEAIERVTGHKLDGLAEHGIIHLINSGSAALDGSCKQRDSEGNPTMKPHWEISQQEADACLAATEWCPAIHEYFRGGGYSSRFLTEGGVPFTMTRVNIIKGLGPVLQIAEGWSVELPKDVHDILNKRTNSTWPTTWFAPRLTGKGPFTDVYSVMANWGANHGVLTIGHVGADFITLASMLRIPVCMHNVEETKVYRPSAWAAHGMDIEGQDYRACQNYGPLYKR.

Catalysis depends on proton acceptor residues E337 and D361. Positions 337, 361, and 528 each coordinate Mn(2+).

This sequence belongs to the L-fucose isomerase family. In terms of assembly, homohexamer. It depends on Mn(2+) as a cofactor.

Its subcellular location is the cytoplasm. It catalyses the reaction L-fucose = L-fuculose. It carries out the reaction D-arabinose = D-ribulose. The enzyme catalyses L-xylopyranose = L-xylulose. The protein operates within carbohydrate degradation; L-fucose degradation; L-lactaldehyde and glycerone phosphate from L-fucose: step 1/3. With respect to regulation, inhibited by ribitol, L-arabitol and dulcitol. Isomerization of L-xylulose to L-xylose is inhibited by xylitol. In terms of biological role, converts the aldose L-fucose into the corresponding ketose L-fuculose. Also converts D-arabinose into D-ribulose. In addition, catalyzes the isomerization of L-xylulose to L-xylose. This chain is L-fucose isomerase, found in Escherichia coli (strain K12).